The primary structure comprises 518 residues: Nicotine N-demethylase CYP82E3 (518 aa).

A helical membrane pass occupies residues 2–22 (VFPVEAIVGLVTFTFLFYFLW). A Glycyl lysine isopeptide (Lys-Gly) (interchain with G-Cter in ubiquitin) cross-link involves residue lysine 254. Cysteine 458 contributes to the heme binding site.

This sequence belongs to the cytochrome P450 family. CYP82E2 subfamily. The cofactor is heme. As to expression, expressed in leaves.

Its subcellular location is the membrane. The catalysed reaction is (S)-nicotine + reduced [NADPH--hemoprotein reductase] + O2 = (S)-nornicotine + formaldehyde + oxidized [NADPH--hemoprotein reductase] + H2O + H(+). It participates in alkaloid biosynthesis; nicotine biosynthesis. Involved in the biosynthesis of pyridine alkaloid natural products, leading mainly to the production of anabasine, anatabine, nicotine and nornicotine, effective deterrents against herbivores with antiparasitic and pesticide properties (neurotoxins); nornicotine serves as the precursor in the synthesis of the carcinogen compound N'-nitrosonornicotine (NNN). Catalyzes the demethylation of nicotine to form nornicotine. This Nicotiana tomentosiformis (Tobacco) protein is Nicotine N-demethylase CYP82E3.